Reading from the N-terminus, the 593-residue chain is Epidermal growth factor receptor kinase substrate 8-like protein 3 (593 aa).

The PTB domain maps to 28–155 (QHRVEHLMTC…ALEEELEQRP (128 aa)). Disordered regions lie at residues 149 to 171 (EELE…RGPA), 184 to 239 (LEPG…ERDE), and 374 to 451 (ADWT…PAQP). A Phosphoserine modification is found at S231. The span at 386–401 (PTFSDDWQLPEPSSQA) shows a compositional bias: polar residues. Over residues 425 to 435 (PQEKTHNHDPQ) the composition is skewed to basic and acidic residues. Residues 450–509 (QPALKMQVLYEFEARNPRELTVVQGEKLEVLDHSKRWWLVKNEAGRSGYIPSNILEPLQP) enclose the SH3 domain.

Belongs to the EPS8 family. As to quaternary structure, interacts with ABI1. Part of a complex that contains SOS1, ABI1 and EPS8L2. Interacts with FASLG.

It is found in the cytoplasm. This is Epidermal growth factor receptor kinase substrate 8-like protein 3 (EPS8L3) from Homo sapiens (Human).